Reading from the N-terminus, the 1150-residue chain is Pyruvate carboxylase (1150 aa).

A Biotin carboxylation domain is found at 3–455; sequence QIKKLLVANR…TTKFIEETPE (453 aa). Positions 119, 161, 211, and 278 each coordinate ATP. An ATP-grasp domain is found at 123–319; it reads RTTAIKADLP…IVKTQILVAA (197 aa). The active site involves Arg294. The region spanning 533 to 802 is the Pyruvate carboxyltransferase domain; the sequence is VLLTDTTFRD…HLRTDIEGME (270 aa). 541–545 serves as a coordination point for substrate; sequence RDAHQ. Residues Asp542, Lys712, His741, and His743 each contribute to the Mn(2+) site. Lys712 bears the N6-carboxylysine mark. Positions 1071–1146 constitute a Biotinyl-binding domain; the sequence is KADKSNPSHI…ATGDLLIEIE (76 aa). Position 1112 is an N6-biotinyllysine (Lys1112).

As to quaternary structure, homotetramer. Biotin serves as cofactor.

It catalyses the reaction hydrogencarbonate + pyruvate + ATP = oxaloacetate + ADP + phosphate + H(+). Its function is as follows. Catalyzes a 2-step reaction, involving the ATP-dependent carboxylation of the covalently attached biotin in the first step and the transfer of the carboxyl group to pyruvate in the second. The sequence is that of Pyruvate carboxylase (pycA) from Staphylococcus aureus (strain Mu50 / ATCC 700699).